The sequence spans 146 residues: Large ribosomal subunit protein uL15 (146 aa).

Positions 1-13 (MKLHELKPAEGSR) are enriched in basic and acidic residues. A disordered region spans residues 1–56 (MKLHELKPAEGSRKVRNRVGRGAATGNGKTSGRGQKGQKARSGGSVRPGFEGGQLP). Gly residues predominate over residues 23-35 (AATGNGKTSGRGQ).

It belongs to the universal ribosomal protein uL15 family. Part of the 50S ribosomal subunit.

Its function is as follows. Binds to the 23S rRNA. This Staphylococcus saprophyticus subsp. saprophyticus (strain ATCC 15305 / DSM 20229 / NCIMB 8711 / NCTC 7292 / S-41) protein is Large ribosomal subunit protein uL15.